Reading from the N-terminus, the 112-residue chain is uncharacterized protein (112 aa).

Residues S51 and S53 each carry the phosphoserine modification. A helical membrane pass occupies residues 90–110; sequence FIFTLSMFLIAFILLIAFVSF.

It localises to the golgi apparatus membrane. The protein localises to the endoplasmic reticulum membrane. This is an uncharacterized protein from Schizosaccharomyces pombe (strain 972 / ATCC 24843) (Fission yeast).